The sequence spans 725 residues: Peroxisomal fatty acid beta-oxidation multifunctional protein MFP2 (725 aa).

Glutamate 119 serves as the catalytic Nucleophile. The active-site Proton acceptor is glutamate 139. The Microbody targeting signal motif lies at 723–725; sequence SRL.

In the N-terminal section; belongs to the enoyl-CoA hydratase/isomerase family. It in the central section; belongs to the 3-hydroxyacyl-CoA dehydrogenase family. In terms of tissue distribution, highly expressed in senescing leaves and at lower levels in flowers and siliques.

It localises to the glyoxysome. The protein localises to the peroxisome. The catalysed reaction is a (3S)-3-hydroxyacyl-CoA = a (2E)-enoyl-CoA + H2O. The enzyme catalyses a 4-saturated-(3S)-3-hydroxyacyl-CoA = a (3E)-enoyl-CoA + H2O. It carries out the reaction (3S)-3-hydroxybutanoyl-CoA = (2E)-butenoyl-CoA + H2O. It catalyses the reaction (3S)-hydroxyoctanoyl-CoA = (2E)-octenoyl-CoA + H2O. The catalysed reaction is (3S)-3-hydroxydodecanoyl-CoA = (2E)-dodecenoyl-CoA + H2O. The enzyme catalyses (3S)-hydroxytetradecanoyl-CoA = (2E)-tetradecenoyl-CoA + H2O. It carries out the reaction (3S)-hydroxyhexanoyl-CoA = (2E)-hexenoyl-CoA + H2O. It catalyses the reaction a (3Z)-enoyl-CoA = a 4-saturated (2E)-enoyl-CoA. The catalysed reaction is a (3E)-enoyl-CoA = a 4-saturated (2E)-enoyl-CoA. The enzyme catalyses (3S)-3-hydroxybutanoyl-CoA = (3R)-3-hydroxybutanoyl-CoA. It carries out the reaction a (3S)-3-hydroxyacyl-CoA + NAD(+) = a 3-oxoacyl-CoA + NADH + H(+). It catalyses the reaction (3S)-3-hydroxybutanoyl-CoA + NAD(+) = acetoacetyl-CoA + NADH + H(+). The catalysed reaction is (3S)-hydroxyhexanoyl-CoA + NAD(+) = 3-oxohexanoyl-CoA + NADH + H(+). The enzyme catalyses (3S)-hydroxyoctanoyl-CoA + NAD(+) = 3-oxooctanoyl-CoA + NADH + H(+). It carries out the reaction (3S)-3-hydroxydodecanoyl-CoA + NAD(+) = 3-oxododecanoyl-CoA + NADH + H(+). It catalyses the reaction (3S)-hydroxytetradecanoyl-CoA + NAD(+) = 3-oxotetradecanoyl-CoA + NADH + H(+). It functions in the pathway lipid metabolism; fatty acid beta-oxidation. Its function is as follows. Involved in peroxisomal fatty acid beta-oxidation during seed germination. Possesses enoyl-CoA hydratase activity against long chain substrates (C14-C18) and 3-hydroxyacyl-CoA dehydrogenase activity against chains of variable sizes (C6-C18). Possesses 3-hydroxy-3-phenylpropionyl-CoA dehydrogenase activity and is involved in the peroxisomal beta-oxidation pathway for the biosynthesis of benzoic acid (BA). Required for the accumulation in seeds of substituted hydroxybenzoylated choline esters, which are BA-containing secondary metabolites. Fatty acid beta-oxidation pathway in peroxisomes regulates gene silencing, histone acetylation and DNA methylation. The protein is Peroxisomal fatty acid beta-oxidation multifunctional protein MFP2 of Arabidopsis thaliana (Mouse-ear cress).